A 154-amino-acid chain; its full sequence is MMNRVIVGAMGLLAAGAVVVGCSNDKPAGAAQVSSGSNAEVKVDGKDLAGLDLKSVTCVKQGGNINVASAAINGQQGLGVVMTDEATPKVTSLGLVYDGAALAVSEGMGAKVGSADVKVDGKTYTITGEASGADVKNPMAGMITKPFTIKVSCG.

An N-terminal signal peptide occupies residues 1-21 (MMNRVIVGAMGLLAAGAVVVG). A lipid anchor (N-palmitoyl cysteine) is attached at C22. Residue C22 is the site of S-diacylglycerol cysteine attachment.

The protein belongs to the mycobacterial 19 kDa antigen family.

It is found in the cell membrane. The chain is Putative lipoprotein MAB_4074c from Mycobacteroides abscessus (strain ATCC 19977 / DSM 44196 / CCUG 20993 / CIP 104536 / JCM 13569 / NCTC 13031 / TMC 1543 / L948) (Mycobacterium abscessus).